The following is a 397-amino-acid chain: Troponin T, skeletal muscle (397 aa).

Positions 1-16 (MSDDEEYTSSEEEEVV) are enriched in acidic residues. Disordered stretches follow at residues 1–148 (MSDD…NFTI), 234–261 (ERQK…YPPK), and 294–397 (DSNE…EEEE). Composition is skewed to basic and acidic residues over residues 37-77 (EFIK…LKEK), 84-129 (TRAE…EKKR), and 136-148 (MKDK…NFTI). 2 stretches are compositionally biased toward basic and acidic residues: residues 294–307 (DSNE…KEQY) and 319–329 (FGERPGKKAGE). Over residues 331 to 397 (ETPEGEEDAK…EEEEEEEEEE (67 aa)) the composition is skewed to acidic residues.

Belongs to the troponin T family. Post-translationally, some glutamate residues are polyglycylated by TTLL3B. This modification occurs exclusively on glutamate residues and results in polyglycine chains on the gamma-carboxyl group. As to expression, isoform 3 is expressed in the hypoderm. Isoform 8 is expressed in the dorsal vessel. Isoform 6 is expressed in adult TDT muscle and isoform 9 in adult IFM, flight and jump muscles.

In terms of biological role, troponin T is the tropomyosin-binding subunit of troponin, the thin filament regulatory complex which confers calcium-sensitivity to striated muscle actomyosin ATPase activity. The polypeptide is Troponin T, skeletal muscle (up) (Drosophila melanogaster (Fruit fly)).